The chain runs to 866 residues: MAYYMDTWAAAPAERPGMIASLSLSFKKAFAELFPQRRRGHSEGDYPPLRGSANNSLEEHYRWQIPIKHNVFEILKSNESQLCEVLQNKFGCISTLSCPTLAGSSSPAQRVFRRTLIPGIELSVWKDDLTRHVVDAVVNAANENLLHGSGLAGSLVKTGGFEIQEESKRIIANVGKISVGGIAITGAGRLPCHLIIHAVGPRWTVTNSQTAIELLKFAIRNILDYVTKYDLRIKTVAIPALSSGIFQFPLDLCTSIILETIRLYFQDKQMFGNLREIHLVSNEDPTVASFKSASESILGRDLSSWGGPETDPASTMTLRIGRGLTLQIVQGCIEMQTTDVIVNSGYMQDFKSGRVAQSILRQAGVEMEKELDKVNLSTDYQEVWVTKGFKLSCQYVFHVAWHSQINKYQILKDAMKSCLEKCLKPDINSISFPALGTGLMDLKKSTAAQIMFEEVFAFAKEHKEKTLTVKIVIFPVDVETYKIFYAEMTKRSNELNLSGNSGALALQWSSGEQRRGGLEAGSPAINLMGVKVGEMCEAQEWIERLLVSLDHHIIENNHILYLGKKEHDVLSELQTSTRVSISETVSPRTATLEIKGPQADLIDAVMRIECMLCDVQEEVAGKREKNLWSLSGQGTNQQEKLDKMEESYTFQRYPASLTQELQDRKKQFEKCGLWVVQVEQIDNKVLLAAFQEKKKMMEERTPKGSGSQRLFQQVPHQFCNTVCRVGFHRMYSTSYNPVYGAGIYFTKSLKNLADKVKKTSSTDKLIYVFEAEVLTGSFCQGNSSNIIPPPLSPGALDVNDSVVDNVSSPETIVVFNGMQAMPLYLWTCTQDRTFSQHPMWSQGYSSGPGMVSSLQSWEWVLNGSSV.

The residue at position 42 (serine 42) is a Phosphoserine. 2 Macro domains span residues 109 to 298 (QRVF…ESIL) and 313 to 492 (ASTM…TKRS). One can recognise a PARP catalytic domain in the interval 635–853 (TNQQEKLDKM…YSSGPGMVSS (219 aa)).

The protein belongs to the ARTD/PARP family. As to quaternary structure, forms a stable complex with E3 ligase DTX3L; the interaction is required for PARP9 mediated ADP-ribosylation of ubiquitin. Interacts (via PARP catalytic domain) with DTX3L (via N-terminus). Forms a complex with STAT1 and DTX3L independently of IFNB1 or IFNG-mediated STAT1 'Tyr-701' phosphorylation. Forms a complex with STAT1, DTX3L and histone H2B H2BC9/H2BJ; the interaction is likely to induce H2BC9/H2BJ ubiquitination. Interacts (via N-terminus) with STAT1. Interacts with PARP14 in IFNG-stimulated macrophages; the interaction prevents PARP14-mediated STAT1 and STAT6 ADP-riboslylation. Interacts with PARP1 (when poly-ADP-ribosylated). Post-translationally, ADP-ribosylated by PARP14. Highly expressed in the thymus and intestine. Expressed in macrophages.

Its subcellular location is the cytoplasm. It is found in the cytosol. It localises to the nucleus. It catalyses the reaction [protein]-C-terminal glycine + NAD(+) = [protein]-C-terminal O-(ADP-D-ribosyl)-glycine + nicotinamide. Its activity is regulated as follows. Binding to poly(ADP-ribose) does not affect its activity. In terms of biological role, ADP-ribosyltransferase which, in association with E3 ligase DTX3L, plays a role in DNA damage repair and in immune responses including interferon-mediated antiviral defenses. Within the complex, enhances DTX3L E3 ligase activity which is further enhanced by PARP9 binding to poly(ADP-ribose). In addition, positively regulates DTXL3 protein levels. In association with DTX3L and in presence of E1 and E2 enzymes, mediates NAD(+)-dependent mono-ADP-ribosylation of ubiquitin which prevents ubiquitin conjugation to substrates such as histones. During DNA repair, PARP1 recruits PARP9/BAL1-DTX3L complex to DNA damage sites via PARP9 binding to ribosylated PARP1. Subsequent PARP1-dependent PARP9/BAL1-DTX3L-mediated ubiquitination promotes the rapid and specific recruitment of 53BP1/TP53BP1, UIMC1/RAP80, and BRCA1 to DNA damage sites. In response to DNA damage, PARP9-DTX3L complex is required for efficient non-homologous end joining (NHEJ) but the complex function is restrained by PARP9 activity. Dispensable for B-cell receptor (BCR) assembly through V(D)J recombination and class switch recombination (CSR). In macrophages, positively regulates pro-inflammatory cytokines production in response to IFNG stimulation by suppressing PARP14-mediated STAT1 ADP-ribosylation and thus promoting STAT1 phosphorylation. Also suppresses PARP14-mediated STAT6 ADP-ribosylation. This chain is Protein mono-ADP-ribosyltransferase PARP9 (Parp9), found in Mus musculus (Mouse).